A 524-amino-acid polypeptide reads, in one-letter code: Nucleobase-ascorbate transporter 2 (524 aa).

The next 12 membrane-spanning stretches (helical) occupy residues 41–61 (YILA…MMGG), 69–89 (VVQT…LFGT), 91–111 (LPTV…IIHD), 133–153 (GAII…MWAI), 155–175 (SRFF…FGLF), 179–199 (FPVV…FVIF), 217–237 (FALI…TASG), 282–302 (AFAM…AFKA), 359–379 (RVIQ…KFGA), 380–400 (LFAS…FGLV), 419–439 (LFIV…FRDF), and 457–477 (DFLN…AVFL).

The protein belongs to the nucleobase:cation symporter-2 (NCS2) (TC 2.A.40) family. In terms of tissue distribution, expressed in cotyledons 10 days after imbibition (DAI). Expressed in the minor and major veins of cotyledons and leaves, in the shoot apex and pedicels. Expressed in the root meristems, root tips and lateral root primordia.

The protein resides in the membrane. This Arabidopsis thaliana (Mouse-ear cress) protein is Nucleobase-ascorbate transporter 2 (NAT2).